The sequence spans 548 residues: Chaperonin GroEL (548 aa).

Residues 29–32, Lys-50, 86–90, Gly-414, 478–480, and Asp-494 contribute to the ATP site; these read TMGP, DGTTT, and NAA.

Belongs to the chaperonin (HSP60) family. In terms of assembly, forms a cylinder of 14 subunits composed of two heptameric rings stacked back-to-back. Interacts with the co-chaperonin GroES.

The protein resides in the cytoplasm. It catalyses the reaction ATP + H2O + a folded polypeptide = ADP + phosphate + an unfolded polypeptide.. Together with its co-chaperonin GroES, plays an essential role in assisting protein folding. The GroEL-GroES system forms a nano-cage that allows encapsulation of the non-native substrate proteins and provides a physical environment optimized to promote and accelerate protein folding. In Legionella pneumophila (strain Paris), this protein is Chaperonin GroEL.